A 298-amino-acid chain; its full sequence is ATP phosphoribosyltransferase (298 aa).

It belongs to the ATP phosphoribosyltransferase family. Long subfamily. Mg(2+) serves as cofactor.

It localises to the cytoplasm. It catalyses the reaction 1-(5-phospho-beta-D-ribosyl)-ATP + diphosphate = 5-phospho-alpha-D-ribose 1-diphosphate + ATP. It participates in amino-acid biosynthesis; L-histidine biosynthesis; L-histidine from 5-phospho-alpha-D-ribose 1-diphosphate: step 1/9. With respect to regulation, feedback inhibited by histidine. In terms of biological role, catalyzes the condensation of ATP and 5-phosphoribose 1-diphosphate to form N'-(5'-phosphoribosyl)-ATP (PR-ATP). Has a crucial role in the pathway because the rate of histidine biosynthesis seems to be controlled primarily by regulation of HisG enzymatic activity. The chain is ATP phosphoribosyltransferase from Aeromonas hydrophila subsp. hydrophila (strain ATCC 7966 / DSM 30187 / BCRC 13018 / CCUG 14551 / JCM 1027 / KCTC 2358 / NCIMB 9240 / NCTC 8049).